Here is a 374-residue protein sequence, read N- to C-terminus: Pre-B-cell leukemia transcription factor 4 (374 aa).

In terms of domain architecture, PBC spans Pro14–Asp209. Positions Asp21 to Gly100 are PBC-A. Residues Gly103–Asp209 form a PBC-B region. Positions Ala210–Met272 form a DNA-binding region, homeobox; TALE-type. Positions Gln333–Asn374 are disordered. The segment covering Leu341–Thr358 has biased composition (polar residues).

This sequence belongs to the TALE/PBX homeobox family.

It is found in the nucleus. The sequence is that of Pre-B-cell leukemia transcription factor 4 (PBX4) from Homo sapiens (Human).